The sequence spans 379 residues: 3-dehydroquinate synthase (379 aa).

Residues 113 to 117 (GVIGD), 137 to 138 (TS), lysine 150, and lysine 159 contribute to the NAD(+) site. Glutamate 192, histidine 256, and histidine 274 together coordinate Zn(2+).

The protein belongs to the sugar phosphate cyclases superfamily. Dehydroquinate synthase family. Co(2+) is required as a cofactor. Zn(2+) serves as cofactor. It depends on NAD(+) as a cofactor.

It is found in the cytoplasm. It catalyses the reaction 7-phospho-2-dehydro-3-deoxy-D-arabino-heptonate = 3-dehydroquinate + phosphate. It functions in the pathway metabolic intermediate biosynthesis; chorismate biosynthesis; chorismate from D-erythrose 4-phosphate and phosphoenolpyruvate: step 2/7. Catalyzes the conversion of 3-deoxy-D-arabino-heptulosonate 7-phosphate (DAHP) to dehydroquinate (DHQ). This is 3-dehydroquinate synthase from Zymomonas mobilis subsp. mobilis (strain ATCC 31821 / ZM4 / CP4).